Reading from the N-terminus, the 608-residue chain is Mitochondrial import receptor subunit TOM70 (608 aa).

Ala-2 is modified (N-acetylalanine). Topologically, residues 2 to 38 are mitochondrial intermembrane; that stretch reads AASKPVEAAVVAAAVPSSGSGVGGGGTAGPGTGGLPR. The chain crosses the membrane as a helical span at residues 39–59; it reads WQLALAVGAPLLLGAGAIYLW. The Cytoplasmic segment spans residues 60-608; it reads SRQQRRREAR…KKYGLKPPTL (549 aa). Residues 67-107 form a disordered region; sequence EARGRGDASGLKRNSERKTPEGRASPAPGSGHPEGPGAHLD. Arg-71 is modified (omega-N-methylarginine). 3 positions are modified to phosphoserine: Ser-91, Ser-96, and Ser-110. 2 TPR repeats span residues 114-147 and 153-186; these read AQAA…CPTE and STFY…NPKY. Lys-185 is subject to N6-acetyllysine. Residue Lys-275 forms a Glycyl lysine isopeptide (Lys-Gly) (interchain with G-Cter in SUMO2) linkage. TPR repeat units follow at residues 294–327, 329–362, 367–400, 401–434, 440–475, 476–509, 511–544, and 545–578; these read ENSG…EGKY, AEAL…KEAN, ANAL…DPQN, ADVY…RPES, QKCF…FPRC, AEGY…EPDN, TTYV…DNKC, and DFAY…AKSE. Residue Ser-434 is modified to Phosphoserine.

The protein belongs to the Tom70 family. In terms of assembly, forms part of the preprotein translocase complex of the outer mitochondrial membrane (TOM complex) which consists of at least 7 different proteins (TOMM5, TOMM6, TOMM7, TOMM20, TOMM22, TOMM40 and TOMM70). Interacts with CAPN8. Interacts with TRADD, TRAF6 and STING. Interacts with MAVS; the interaction is enhanced by Sendai virus infection. Interacts with HSPA8 and HSP90AA1; both interactions are required for preprotein mitochondrial import. The interaction with HSP90AA1 is direct and mediates the association of TOMM70 with IRF3 and TBK1. Upon mitochondrial depolarization, interacts with PINK1; the interaction is required for PINK1-TOM-TIM23 supercomplex formation which is critical for PINK1 stabilization at the outer mitochondrial membrane, kinase activation and downstream mitophagy. As to quaternary structure, (Microbial infection) Interacts (via C-terminus) with SARS coronaviru/SARS-CoV and SARS coronavirus-2/SARS-CoV-2 virus protein ORF9b. (Microbial infection) Interacts with parasite T.gondii RH strain MAF1b1; the interaction impairs TOMM70 import activity, enables the parasite to associate with the host mitochondria and facilitates the association of MAF1b1 with MIB complex component SAMM50, promoting the formation of SPOTs (structures positive for outer mitochondrial membrane (OMM)); the interaction is probably indirect.

Its subcellular location is the mitochondrion outer membrane. Acts as a receptor of the preprotein translocase complex of the outer mitochondrial membrane (TOM complex). Recognizes and mediates the translocation of mitochondrial preproteins from the cytosol into the mitochondria in a chaperone dependent manner. Mediates TBK1 and IRF3 activation induced by MAVS in response to Sendai virus infection and promotes host antiviral responses during virus infection. Upon Sendai virus infection, recruits HSP90AA1:IRF3:BAX in mitochondrion and the complex induces apoptosis. This chain is Mitochondrial import receptor subunit TOM70, found in Homo sapiens (Human).